The primary structure comprises 549 residues: MAKELRYNTDARARLEHGVNALADAVKVTLGPKGRNAVLEKLTGPPTITNDGVTIAREIQLREPFANMGAQLVKEVAMKTNGVVGDGTTTATVLAQAMVREGLRSVDAGANPMRVRRGIERAVSVVVDSLHEQASQIGGQSDLQRIATLAASDDEVIGHAISKAVDYVGKSGVVTTEESDTLGLSVDIVDGIEFDHGYISGYMVTDPERMEAVHTNPLILLTNKKITQVQDIMPSIEVAKRADRPLVVLAEEVDGPALQLLVGGNMHKTMQSVVVRAPGFGHRRVAELEDLAVALGGHVIAKDTGIELSEISVEHLGSCDRITVTENETTIVGGHGDQRLLDARIAQLESQHERAKIEADQESLELRIARLTGRVAVIRVGGATSVELKERMLRVEDALAATRAAVEAGIVSGGGTALAQSHRALADLDLTGDEAIGCDVVRRALAEPLRWIAINAGFDGDEVVEVVAGLPLGHGFNALTGEYGDMFDDGVIDPFKVTRAALESAASIAALLITTETAVVEEVLGNPGAIMAPGFGDLAEGMVRPSNIY.

Belongs to the chaperonin (HSP60) family.

Functionally, probably plays an essential role in the productive folding of PrmA, and thus in the formation of the active PrmABCD complex. The chain is Probable chaperonin-like protein PrmG (prmG) from Rhodococcus jostii (strain RHA1).